The primary structure comprises 180 residues: Adenine phosphoribosyltransferase (180 aa).

The residue at position 2 (alanine 2) is an N-acetylalanine. Phosphoserine occurs at positions 4, 15, and 30. Phosphotyrosine is present on tyrosine 60. Serine 66 carries the post-translational modification Phosphoserine. Position 114 is an N6-acetyllysine (lysine 114). Threonine 135 is subject to Phosphothreonine.

The protein belongs to the purine/pyrimidine phosphoribosyltransferase family. In terms of assembly, homodimer.

It localises to the cytoplasm. The enzyme catalyses AMP + diphosphate = 5-phospho-alpha-D-ribose 1-diphosphate + adenine. Its pathway is purine metabolism; AMP biosynthesis via salvage pathway; AMP from adenine: step 1/1. In terms of biological role, catalyzes a salvage reaction resulting in the formation of AMP, that is energically less costly than de novo synthesis. The protein is Adenine phosphoribosyltransferase of Homo sapiens (Human).